Here is a 425-residue protein sequence, read N- to C-terminus: MNSISEEAKYTIQKVHAREILDSRGNPTVEVDIYTGCGFGRASVPSGASTGSNEALELRDKDADRYNGKGVLKAVDNINKTLSKELLGMDARNQREIDELMIALDGTENKKTFGANAILGISMATAKAAADSLGIALYRYLGGTNAFALPVPTMNVINGGKHAGNDLSIQEFMIQPKGADTFSNALRMGAETYHALGKVLEDKYGASATNVGYEGGYAPPISTTADALDALVSAIEEAGYTESEISIGLDSAASEFFDGDKYFIDGNKLAPAELVDYYLDLIETYPILSIEDPFHEESFEDFAALTSEAWDTIIVGDDLFVTNVNRLAKGIEMEAANALLLKVNQIGTISESFDAANLAQRNGYSVVVSHRSAETEDTMIADISVAIGGDLIKTGAPARSERTAKYNQLLRIEEDLGDAARYVQL.

A (2R)-2-phosphoglycerate-binding site is contributed by Gln170. The active-site Proton donor is the Glu214. The Mg(2+) site is built by Asp250, Glu291, and Asp317. (2R)-2-phosphoglycerate is bound by residues Lys342, Arg371, Ser372, and Lys393. The Proton acceptor role is filled by Lys342.

This sequence belongs to the enolase family. It depends on Mg(2+) as a cofactor.

It localises to the cytoplasm. The protein localises to the secreted. It is found in the cell surface. The catalysed reaction is (2R)-2-phosphoglycerate = phosphoenolpyruvate + H2O. Its pathway is carbohydrate degradation; glycolysis; pyruvate from D-glyceraldehyde 3-phosphate: step 4/5. Functionally, catalyzes the reversible conversion of 2-phosphoglycerate (2-PG) into phosphoenolpyruvate (PEP). It is essential for the degradation of carbohydrates via glycolysis. This chain is Enolase, found in Methanococcoides burtonii (strain DSM 6242 / NBRC 107633 / OCM 468 / ACE-M).